Reading from the N-terminus, the 678-residue chain is Glycine--tRNA ligase beta subunit (678 aa).

This sequence belongs to the class-II aminoacyl-tRNA synthetase family. Tetramer of two alpha and two beta subunits.

It is found in the cytoplasm. It catalyses the reaction tRNA(Gly) + glycine + ATP = glycyl-tRNA(Gly) + AMP + diphosphate. The sequence is that of Glycine--tRNA ligase beta subunit from Streptococcus pneumoniae (strain ATCC BAA-255 / R6).